A 158-amino-acid polypeptide reads, in one-letter code: Cytochrome c-type biogenesis protein CcmE (158 aa).

Residues 1–8 (MMRHRNRR) lie on the Cytoplasmic side of the membrane. Residues 9 to 29 (LATIAASAIVLVVAVGLGLMA) form a helical; Signal-anchor for type II membrane protein membrane-spanning segment. At 30–158 (LRSAVVFFYS…PSAAGDGDSR (129 aa)) the chain is on the periplasmic side. Heme contacts are provided by H123 and Y127. A disordered region spans residues 139–158 (AGVWQGEGETPSAAGDGDSR).

The protein belongs to the CcmE/CycJ family.

It is found in the cell inner membrane. Heme chaperone required for the biogenesis of c-type cytochromes. Transiently binds heme delivered by CcmC and transfers the heme to apo-cytochromes in a process facilitated by CcmF and CcmH. The chain is Cytochrome c-type biogenesis protein CcmE from Maricaulis maris (strain MCS10) (Caulobacter maris).